Consider the following 1038-residue polypeptide: Kinesin-like protein KIN-5B (1038 aa).

Positions 1 to 63 (MAQTPNPSRR…GGGGGGGSEM (63 aa)) are disordered. Positions 24–34 (RPERRQLELRW) are enriched in basic and acidic residues. Gly residues predominate over residues 49 to 61 (GLTGGGGGGGGGS). Residues 69-410 (NVQVVLRCRP…LDYAYRAKSI (342 aa)) form the Kinesin motor domain. 154–161 (GQTGTGKT) provides a ligand contact to ATP. The stretch at 453-502 (QERFALEEAEKKTMRDKIEYLETQNKELKMNIESCKKEYLDLEEAHSRAN) forms a coiled coil. Residues 1013–1038 (DKGKRYVDQGTRTPRSPLMPVNHYNK) form a disordered region.

This sequence belongs to the TRAFAC class myosin-kinesin ATPase superfamily. Kinesin family. KIN-5/BimC subfamily.

It localises to the cytoplasm. Its subcellular location is the cytoskeleton. The protein resides in the spindle. Its function is as follows. Responsible for microtubule translocation. May be important for the organization of phragmoplast-specific arrays of microtubules. Plays an essential role in stabilizing the mitotic spindle. Required during mitotic cytokinesis. The polypeptide is Kinesin-like protein KIN-5B (Oryza sativa subsp. japonica (Rice)).